The chain runs to 571 residues: Septation ring formation regulator EzrA (571 aa).

The Extracellular portion of the chain corresponds to 1–3; it reads MYY. The helical transmembrane segment at 4-22 threads the bilayer; that stretch reads MLIGFIIVVIAVIGAGYIL. At 23–571 the chain is on the cytoplasmic side; sequence KRKHYQRINE…ASKVSVDDIE (549 aa). 5 coiled-coil regions span residues 102–147, 248–298, 326–374, 400–437, and 478–529; these read ATNA…TKEK, LAQM…DTLE, DALA…ASGE, KFAE…ERER, and RIAE…ENHF.

The protein belongs to the EzrA family.

Its subcellular location is the cell membrane. Negative regulator of FtsZ ring formation; modulates the frequency and position of FtsZ ring formation. Inhibits FtsZ ring formation at polar sites. Interacts either with FtsZ or with one of its binding partners to promote depolymerization. The sequence is that of Septation ring formation regulator EzrA from Listeria monocytogenes serotype 4a (strain HCC23).